The chain runs to 1363 residues: Spike glycoprotein (1363 aa).

The signal sequence occupies residues 1-13; it reads MFLILLISLPTAF. Residues 14–1307 are Extracellular-facing; the sequence is AVIGDLKCTT…GTYEYYVKWP (1294 aa). The BetaCoV S1-NTD domain occupies 15-298; that stretch reads VIGDLKCTTV…DFMSEIKCKT (284 aa). Cystine bridges form between Cys-21–Cys-165, Cys-160–Cys-193, Cys-172–Cys-252, Cys-286–Cys-296, and Cys-331–Cys-356. 2 N-linked (GlcNAc...) asparagine; by host glycosylation sites follow: Asn-59 and Asn-133. N-linked (GlcNAc...) asparagine; by host glycosylation occurs at Asn-198. Residues 329–617 form the BetaCoV S1-CTD domain; the sequence is PDCNIEAWLN…DVNSGTTCST (289 aa). N-linked (GlcNAc...) asparagine; by host glycosylation occurs at Asn-359. Intrachain disulfides connect Cys-374–Cys-427 and Cys-386–Cys-615. N-linked (GlcNAc...) asparagine; by host glycosylation is found at Asn-437, Asn-649, Asn-676, Asn-696, Asn-714, Asn-739, and Asn-788. 2 fusion peptide regions span residues 914–935 and 933–953; these read SAIE…VEAY and EAYN…VQSY. An N-linked (GlcNAc...) asparagine; by host glycan is attached at Asn-937. A disulfide bridge links Cys-938 with Cys-949. Positions 1014 to 1064 are heptad repeat 1; sequence QKLIANAFNNALGAIQEGFDATNSALVKIQAVVNANAETLNNLLQQLSNRF. Positions 1043-1087 form a coiled coil; it reads QAVVNANAETLNNLLQQLSNRFGAISSSLQEILSRLDALEAQAQI. Residues Asn-1194, Asn-1224, Asn-1234, Asn-1253, Asn-1267, and Asn-1288 are each glycosylated (N-linked (GlcNAc...) asparagine; by host). The heptad repeat 2 stretch occupies residues 1258–1296; that stretch reads APDLSLDYINVTFLDLQDEMNRLQEAIKVLNQSYINLKD. Residues 1269–1297 are a coiled coil; it reads TFLDLQDEMNRLQEAIKVLNQSYINLKDI. The helical transmembrane segment at 1308 to 1328 threads the bilayer; the sequence is WYVWLLIGFAGVAMLVLLFFI. Over 1329–1363 the chain is Cytoplasmic; that stretch reads CCCTGCGTSCFKKCGGCCDDYTGHQELVIKTSHED. Positions 1359–1363 match the KxHxx motif; sequence TSHED.

It belongs to the betacoronaviruses spike protein family. As to quaternary structure, homotrimer; each monomer consists of a S1 and a S2 subunit. The resulting peplomers protrude from the virus surface as spikes. Post-translationally, specific enzymatic cleavages in vivo yield mature proteins. The precursor is processed into S1 and S2 by host cell furin or another cellular protease to yield the mature S1 and S2 proteins. Additionally, a second cleavage leads to the release of a fusion peptide after viral attachment to host cell receptor. The cytoplasmic Cys-rich domain is palmitoylated. Spike glycoprotein is digested within host endosomes.

The protein resides in the virion membrane. The protein localises to the host endoplasmic reticulum-Golgi intermediate compartment membrane. It localises to the host cell membrane. Functionally, attaches the virion to the cell membrane by interacting with host receptor, initiating the infection. Mediates fusion of the virion and cellular membranes by acting as a class I viral fusion protein. Under the current model, the protein has at least three conformational states: pre-fusion native state, pre-hairpin intermediate state, and post-fusion hairpin state. During viral and target cell membrane fusion, the coiled coil regions (heptad repeats) assume a trimer-of-hairpins structure, positioning the fusion peptide in close proximity to the C-terminal region of the ectodomain. The formation of this structure appears to drive apposition and subsequent fusion of viral and target cell membranes. Its function is as follows. Acts as a viral fusion peptide which is unmasked following S2 cleavage occurring upon virus endocytosis. This is Spike glycoprotein from Bovine coronavirus (strain 98TXSF-110-LUN) (BCoV-LUN).